A 528-amino-acid polypeptide reads, in one-letter code: Putative pumilio homolog 10 (528 aa).

A PUM-HD domain is found at Glu-188–Lys-528. 8 Pumilio repeats span residues Glu-213 to Leu-248, Glu-249 to Ser-284, Val-285 to Lys-323, Ala-325 to Glu-360, Ala-361 to Ala-396, Glu-397 to Arg-433, Thr-434 to Arg-465, and Glu-466 to Glu-503.

The protein localises to the cytoplasm. In terms of biological role, sequence-specific RNA-binding protein that regulates translation and mRNA stability by binding the 3'-UTR of target mRNAs. In Arabidopsis thaliana (Mouse-ear cress), this protein is Putative pumilio homolog 10 (APUM10).